Reading from the N-terminus, the 734-residue chain is Photosystem I P700 chlorophyll a apoprotein A2 (734 aa).

The next 8 membrane-spanning stretches (helical) occupy residues 46–69 (IFAS…FHVA), 135–158 (LYTG…LHLQ), 175–199 (LNHH…HVAI), 273–291 (MAHH…GHMY), 330–353 (IHFQ…QHMY), 369–395 (AALY…IFFI), 417–439 (AIIS…LYVH), and 517–535 (FLVH…LILV). Positions 559 and 568 each coordinate [4Fe-4S] cluster. Transmembrane regions (helical) follow at residues 575–596 (AFYL…YWHW) and 643–665 (LSVW…MFLI). Histidine 654, methionine 662, and tyrosine 670 together coordinate chlorophyll a. Tryptophan 671 contributes to the phylloquinone binding site. The chain crosses the membrane as a helical span at residues 707-727 (LVGLAHFSVGYIFTYAAFLIA).

Belongs to the PsaA/PsaB family. The PsaA/B heterodimer binds the P700 chlorophyll special pair and subsequent electron acceptors. PSI consists of a core antenna complex that captures photons, and an electron transfer chain that converts photonic excitation into a charge separation. The eukaryotic PSI reaction center is composed of at least 11 subunits. P700 is a chlorophyll a/chlorophyll a' dimer, A0 is one or more chlorophyll a, A1 is one or both phylloquinones and FX is a shared 4Fe-4S iron-sulfur center. serves as cofactor.

The protein localises to the plastid. It localises to the chloroplast thylakoid membrane. The catalysed reaction is reduced [plastocyanin] + hnu + oxidized [2Fe-2S]-[ferredoxin] = oxidized [plastocyanin] + reduced [2Fe-2S]-[ferredoxin]. Functionally, psaA and PsaB bind P700, the primary electron donor of photosystem I (PSI), as well as the electron acceptors A0, A1 and FX. PSI is a plastocyanin-ferredoxin oxidoreductase, converting photonic excitation into a charge separation, which transfers an electron from the donor P700 chlorophyll pair to the spectroscopically characterized acceptors A0, A1, FX, FA and FB in turn. Oxidized P700 is reduced on the lumenal side of the thylakoid membrane by plastocyanin. The sequence is that of Photosystem I P700 chlorophyll a apoprotein A2 from Draba nemorosa (Woodland whitlowgrass).